A 253-amino-acid chain; its full sequence is MRILLSNDDGVHAPGIQTLAKALREFADVQVVAPDRNRSGASNSLTLESSLRTFTFENGDIAVQMGTPTDCVYLGVNALMRPRPDIVVSGINAGPNLGDDVIYSGTVAAAMEGRHLGFPALAVSLDGHKHYDTAAAVTCSILRALCKEPLRTGRILNINVPDLPLDQIKGIRVTRCGTRHPADQVIPQQDPRGNTLYWIGPPGGKCDAGPGTDFAAVDDGYVSITPLHVDLTAHSAQDVVSDWLNSVGVGTQW.

The a divalent metal cation site is built by Asp-8, Asp-9, Ser-39, and Asn-92.

It belongs to the SurE nucleotidase family. The cofactor is a divalent metal cation.

The protein resides in the cytoplasm. It carries out the reaction a ribonucleoside 5'-phosphate + H2O = a ribonucleoside + phosphate. It catalyses the reaction a ribonucleoside 3'-phosphate + H2O = a ribonucleoside + phosphate. The enzyme catalyses [phosphate](n) + H2O = [phosphate](n-1) + phosphate + H(+). Functionally, nucleotidase with a broad substrate specificity as it can dephosphorylate various ribo- and deoxyribonucleoside 5'-monophosphates and ribonucleoside 3'-monophosphates with highest affinity to 3'-AMP. Also hydrolyzes polyphosphate (exopolyphosphatase activity) with the preference for short-chain-length substrates (P20-25). Might be involved in the regulation of dNTP and NTP pools, and in the turnover of 3'-mononucleotides produced by numerous intracellular RNases (T1, T2, and F) during the degradation of various RNAs. The protein is 5'/3'-nucleotidase SurE of Escherichia coli O127:H6 (strain E2348/69 / EPEC).